The chain runs to 238 residues: 1-(5-phosphoribosyl)-5-[(5-phosphoribosylamino)methylideneamino] imidazole-4-carboxamide isomerase (238 aa).

D8 acts as the Proton acceptor in catalysis. Residue D129 is the Proton donor of the active site.

It belongs to the HisA/HisF family.

The protein localises to the cytoplasm. It catalyses the reaction 1-(5-phospho-beta-D-ribosyl)-5-[(5-phospho-beta-D-ribosylamino)methylideneamino]imidazole-4-carboxamide = 5-[(5-phospho-1-deoxy-D-ribulos-1-ylimino)methylamino]-1-(5-phospho-beta-D-ribosyl)imidazole-4-carboxamide. It participates in amino-acid biosynthesis; L-histidine biosynthesis; L-histidine from 5-phospho-alpha-D-ribose 1-diphosphate: step 4/9. The polypeptide is 1-(5-phosphoribosyl)-5-[(5-phosphoribosylamino)methylideneamino] imidazole-4-carboxamide isomerase (Jannaschia sp. (strain CCS1)).